The sequence spans 475 residues: uncharacterized protein (475 aa).

A helical transmembrane segment spans residues 19-39 (IKVGVFFVAILLILTGILLTI). Disordered stretches follow at residues 55–79 (GEYH…NATS) and 330–350 (SSPF…PHKG). Over residues 60–79 (LNTSPNENSTALQPDENATS) the composition is skewed to polar residues. Residues 336-348 (NRRHPVTGRIRPH) show a composition bias toward basic residues. A Zn(2+)-binding site is contributed by H348.

It in the central section; belongs to the OapA family. The protein in the C-terminal section; belongs to the peptidase M23B family. It depends on Zn(2+) as a cofactor.

The protein resides in the cell membrane. This is an uncharacterized protein from Haemophilus influenzae (strain ATCC 51907 / DSM 11121 / KW20 / Rd).